A 610-amino-acid polypeptide reads, in one-letter code: MPPVSASKAKRDAKKAEREAKKAAAGKTIRKLGRKKEAAAEESEVDAAAREIKMMKLQQDKDGLSDRVVTGVLSSLETSRDIKLSSVSLLFHGKVLIQDSGLELNYGRRYGLLGENGCGKSTFLKALATREYPIPEHIDIYLLDEPAEPSELSALDYVVTEAQHELKRIEDLVEKTILEDGPESELLEPLYERMDSLDPDTFESRAAIILIGLGFNKKTILKKTKDMSGGWKMRVALAKALFVKPTLLLLDDPTAHLDLEACVWLEEYLKRFDRTLVLVSHSQDFLNGVCTNMIDMRAQKLTAYGGNYDSYHKTRSELETNQMKQYNKQQEEIQHIKKFIASAGTYANLVKQAKSRQKILDKMEADGLVQPVVPDKVFSFRFPQVERLPPPVLAFDDISFHYESNPSENLYEHLNFGVDMDSRIALVGPNGVGKSTLLKIMTGELTPQSGRVSRHTHVKLGVYSQHSQDQLDLTKSALEFVRDKYSNISQDFQFWRGQLGRYGLTGEGQTVQMATLSEGQRSRVVFALLALEQPNVLLLDEPTNGLDIPTIDSLADAINEFNGGVVVVSHDFRLLDKIAQDIFVVENKTATRWDGSILQYKNKLAKNVVL.

Residues 1–43 (MPPVSASKAKRDAKKAEREAKKAAAGKTIRKLGRKKEAAAEES) form a disordered region. Residues S43 and S65 each carry the phosphoserine modification. ABC transporter domains follow at residues 82-323 (IKLS…TNQM) and 393-610 (LAFD…NVVL). An ATP-binding site is contributed by 114 to 121 (GENGCGKS). S196 is subject to Phosphoserine. ATP is bound at residue 428–435 (GPNGVGKS). T446 is modified (phosphothreonine).

It belongs to the ABC transporter superfamily. ABCF family. EF3 subfamily. Interacts with LSG1.

The protein resides in the cytoplasm. It localises to the nucleus. The catalysed reaction is ATP + H2O = ADP + phosphate + H(+). ATPase that stimulates 40S and 60S ribosome biogenesis. Also involved in ribosome-associated quality control (RQC) pathway, a pathway that mediates ubiquitination and extraction of incompletely synthesized nascent chains for proteasomal degradation: localizes to the ribosomal E-site and stimulates VMS1-dependent tRNA cleavage. In Saccharomyces cerevisiae (strain ATCC 204508 / S288c) (Baker's yeast), this protein is ABC transporter ATP-binding protein ARB1 (ARB1).